The following is a 192-amino-acid chain: Peptidyl-tRNA hydrolase (192 aa).

Residue Tyr14 coordinates tRNA. The active-site Proton acceptor is His19. Positions 64, 66, and 112 each coordinate tRNA.

It belongs to the PTH family. Monomer.

Its subcellular location is the cytoplasm. It carries out the reaction an N-acyl-L-alpha-aminoacyl-tRNA + H2O = an N-acyl-L-amino acid + a tRNA + H(+). Hydrolyzes ribosome-free peptidyl-tRNAs (with 1 or more amino acids incorporated), which drop off the ribosome during protein synthesis, or as a result of ribosome stalling. Functionally, catalyzes the release of premature peptidyl moieties from peptidyl-tRNA molecules trapped in stalled 50S ribosomal subunits, and thus maintains levels of free tRNAs and 50S ribosomes. The sequence is that of Peptidyl-tRNA hydrolase from Anaeromyxobacter sp. (strain K).